A 375-amino-acid chain; its full sequence is Carbamoyl phosphate synthase small chain (375 aa).

Residues 1 to 186 (MKAILALEDG…IVDGTYAWPG (186 aa)) form a CPSase region. Residues serine 45, glycine 238, and glycine 240 each coordinate L-glutamine. In terms of domain architecture, Glutamine amidotransferase type-1 spans 190–375 (RLVVFDMGIK…RNLVRKETGK (186 aa)). Cysteine 265 serves as the catalytic Nucleophile. Leucine 266, glutamine 269, asparagine 307, glycine 309, and phenylalanine 310 together coordinate L-glutamine. Catalysis depends on residues histidine 348 and glutamate 350.

This sequence belongs to the CarA family. Composed of two chains; the small (or glutamine) chain promotes the hydrolysis of glutamine to ammonia, which is used by the large (or ammonia) chain to synthesize carbamoyl phosphate. Tetramer of heterodimers (alpha,beta)4.

The catalysed reaction is hydrogencarbonate + L-glutamine + 2 ATP + H2O = carbamoyl phosphate + L-glutamate + 2 ADP + phosphate + 2 H(+). It catalyses the reaction L-glutamine + H2O = L-glutamate + NH4(+). The protein operates within amino-acid biosynthesis; L-arginine biosynthesis; carbamoyl phosphate from bicarbonate: step 1/1. Its pathway is pyrimidine metabolism; UMP biosynthesis via de novo pathway; (S)-dihydroorotate from bicarbonate: step 1/3. Small subunit of the glutamine-dependent carbamoyl phosphate synthetase (CPSase). CPSase catalyzes the formation of carbamoyl phosphate from the ammonia moiety of glutamine, carbonate, and phosphate donated by ATP, constituting the first step of 2 biosynthetic pathways, one leading to arginine and/or urea and the other to pyrimidine nucleotides. The small subunit (glutamine amidotransferase) binds and cleaves glutamine to supply the large subunit with the substrate ammonia. The protein is Carbamoyl phosphate synthase small chain of Solidesulfovibrio magneticus (strain ATCC 700980 / DSM 13731 / RS-1) (Desulfovibrio magneticus).